The sequence spans 250 residues: Cell division protein FtsQ (250 aa).

Residues 1–11 (MWNNVRQLNLA) are Cytoplasmic-facing. The helical transmembrane segment at 12–32 (ASALYALLLLVLAAAGCYWLI) threads the bilayer. Topologically, residues 33–250 (QRPAFALREI…FLTDTDKGKK (218 aa)) are periplasmic. One can recognise a POTRA domain in the interval 37–106 (FALREIRIDG…NALAVTLEEY (70 aa)).

This sequence belongs to the FtsQ/DivIB family. FtsQ subfamily. Part of a complex composed of FtsB, FtsL and FtsQ.

The protein resides in the cell inner membrane. In terms of biological role, essential cell division protein. May link together the upstream cell division proteins, which are predominantly cytoplasmic, with the downstream cell division proteins, which are predominantly periplasmic. May control correct divisome assembly. In Burkholderia pseudomallei (strain K96243), this protein is Cell division protein FtsQ.